The primary structure comprises 1067 residues: Eukaryotic translation initiation factor 3 subunit A (1067 aa).

Positions 92-121 form a coiled coil; it reads LKKFIELAEKKVTEAQAKADEIQSSLESAA. Residues 339–523 form the PCI domain; that stretch reads MTKAASFVLL…GVLTFDTDIF (185 aa). Positions 608-899 form a coiled coil; sequence RVLIEKKKEA…QKQREEEAEA (292 aa). 4 stretches are compositionally biased toward basic and acidic residues: residues 617-632, 642-665, 795-901, and 916-926; these read AATD…EETR, EAEK…DEQD, EVSE…EARR, and AEPERPAERTA. Disordered regions lie at residues 617–665 and 795–1067; these read AATD…DEQD and EVSE…QQQQ. Low complexity-rich tracts occupy residues 965–976 and 1025–1046; these read AAPAAAPAPAAE and SSSS…AASS.

This sequence belongs to the eIF-3 subunit A family. As to quaternary structure, component of the eukaryotic translation initiation factor 3 (eIF-3) complex.

It localises to the cytoplasm. Functionally, RNA-binding component of the eukaryotic translation initiation factor 3 (eIF-3) complex, which is involved in protein synthesis of a specialized repertoire of mRNAs and, together with other initiation factors, stimulates binding of mRNA and methionyl-tRNAi to the 40S ribosome. The eIF-3 complex specifically targets and initiates translation of a subset of mRNAs involved in cell proliferation. The sequence is that of Eukaryotic translation initiation factor 3 subunit A (tif32) from Neosartorya fischeri (strain ATCC 1020 / DSM 3700 / CBS 544.65 / FGSC A1164 / JCM 1740 / NRRL 181 / WB 181) (Aspergillus fischerianus).